The following is a 318-amino-acid chain: Methenyltetrahydromethanopterin cyclohydrolase (318 aa).

The protein belongs to the MCH family.

The protein resides in the cytoplasm. The enzyme catalyses 5,10-methenyl-5,6,7,8-tetrahydromethanopterin + H2O = N(5)-formyl-5,6,7,8-tetrahydromethanopterin + H(+). It participates in one-carbon metabolism; methanogenesis from CO(2); 5,10-methenyl-5,6,7,8-tetrahydromethanopterin from CO(2): step 3/3. Functionally, catalyzes the reversible interconversion of 5-formyl-H(4)MPT to methenyl-H(4)MPT(+). This is Methenyltetrahydromethanopterin cyclohydrolase from Methanocella arvoryzae (strain DSM 22066 / NBRC 105507 / MRE50).